Consider the following 248-residue polypeptide: 3-deoxy-manno-octulosonate cytidylyltransferase (248 aa).

This sequence belongs to the KdsB family.

It localises to the cytoplasm. The enzyme catalyses 3-deoxy-alpha-D-manno-oct-2-ulosonate + CTP = CMP-3-deoxy-beta-D-manno-octulosonate + diphosphate. It functions in the pathway nucleotide-sugar biosynthesis; CMP-3-deoxy-D-manno-octulosonate biosynthesis; CMP-3-deoxy-D-manno-octulosonate from 3-deoxy-D-manno-octulosonate and CTP: step 1/1. Its pathway is bacterial outer membrane biogenesis; lipopolysaccharide biosynthesis. In terms of biological role, activates KDO (a required 8-carbon sugar) for incorporation into bacterial lipopolysaccharide in Gram-negative bacteria. The sequence is that of 3-deoxy-manno-octulosonate cytidylyltransferase from Chlorobaculum tepidum (strain ATCC 49652 / DSM 12025 / NBRC 103806 / TLS) (Chlorobium tepidum).